The following is a 130-amino-acid chain: Small ribosomal subunit protein uS8 (130 aa).

This sequence belongs to the universal ribosomal protein uS8 family. Part of the 30S ribosomal subunit.

One of the primary rRNA binding proteins, it binds directly to 16S rRNA central domain where it helps coordinate assembly of the platform of the 30S subunit. The chain is Small ribosomal subunit protein uS8 from Pyrococcus furiosus (strain ATCC 43587 / DSM 3638 / JCM 8422 / Vc1).